Reading from the N-terminus, the 298-residue chain is MSTADKSLSGWAPAKVNLYLHVGPPKPNGRHDLESLVMFSGSGAADHLTAEPAEGLSLSVAGPFAAAAGAGDDNLVLQAARALQAASGTQQGARLSLKKWLPVAAGIGGGSSDAATALRLLTKLWALDPNHAIALAPGLGGDVPVALAGQPSLMRGEGERVTPLPALPPVYAVLVNPGVPCPTGPVFRDHDAAGGGAGFAEIDPPPEFSGPKAFAAWLGQQRNDLESPAIARVPEIGAVLEFLRAQPGVLLARMSGSGATCFALCEALAFAERATAVIAHDAHKAHWWTAASRLGAAP.

Residue Lys-15 is part of the active site. Residue 102–112 (PVAAGIGGGSS) participates in ATP binding. Asp-142 is an active-site residue.

This sequence belongs to the GHMP kinase family. IspE subfamily.

It carries out the reaction 4-CDP-2-C-methyl-D-erythritol + ATP = 4-CDP-2-C-methyl-D-erythritol 2-phosphate + ADP + H(+). It participates in isoprenoid biosynthesis; isopentenyl diphosphate biosynthesis via DXP pathway; isopentenyl diphosphate from 1-deoxy-D-xylulose 5-phosphate: step 3/6. Catalyzes the phosphorylation of the position 2 hydroxy group of 4-diphosphocytidyl-2C-methyl-D-erythritol. The chain is 4-diphosphocytidyl-2-C-methyl-D-erythritol kinase from Hyphomonas neptunium (strain ATCC 15444).